We begin with the raw amino-acid sequence, 124 residues long: Small ribosomal subunit protein uS12 (124 aa).

Asp-89 bears the 3-methylthioaspartic acid mark.

The protein belongs to the universal ribosomal protein uS12 family. In terms of assembly, part of the 30S ribosomal subunit. Contacts proteins S8 and S17. May interact with IF1 in the 30S initiation complex.

Functionally, with S4 and S5 plays an important role in translational accuracy. Interacts with and stabilizes bases of the 16S rRNA that are involved in tRNA selection in the A site and with the mRNA backbone. Located at the interface of the 30S and 50S subunits, it traverses the body of the 30S subunit contacting proteins on the other side and probably holding the rRNA structure together. The combined cluster of proteins S8, S12 and S17 appears to hold together the shoulder and platform of the 30S subunit. The polypeptide is Small ribosomal subunit protein uS12 (Leptospira biflexa serovar Patoc (strain Patoc 1 / Ames)).